Reading from the N-terminus, the 393-residue chain is Chorismate synthase (393 aa).

Residues arginine 40 and arginine 46 each coordinate NADP(+). FMN-binding positions include 129-131, 251-252, glycine 301, 316-320, and arginine 342; these read RAS, QA, and KPIST.

This sequence belongs to the chorismate synthase family. As to quaternary structure, homotetramer. The cofactor is FMNH2.

It catalyses the reaction 5-O-(1-carboxyvinyl)-3-phosphoshikimate = chorismate + phosphate. Its pathway is metabolic intermediate biosynthesis; chorismate biosynthesis; chorismate from D-erythrose 4-phosphate and phosphoenolpyruvate: step 7/7. Its function is as follows. Catalyzes the anti-1,4-elimination of the C-3 phosphate and the C-6 proR hydrogen from 5-enolpyruvylshikimate-3-phosphate (EPSP) to yield chorismate, which is the branch point compound that serves as the starting substrate for the three terminal pathways of aromatic amino acid biosynthesis. This reaction introduces a second double bond into the aromatic ring system. The chain is Chorismate synthase from Koribacter versatilis (strain Ellin345).